The primary structure comprises 33 residues: Mu-theraphotoxin-Osp1b (33 aa).

Cystine bridges form between Cys2–Cys17, Cys9–Cys22, and Cys16–Cys29.

The protein belongs to the neurotoxin 10 (Hwtx-1) family. 22 (Htx-4) subfamily. As to expression, expressed by the venom gland.

Its subcellular location is the secreted. Voltage-gated sodium channel Nav1.7/SCN9A inhibitor. The polypeptide is Mu-theraphotoxin-Osp1b (Orphnaecus sp. (strain Maanghit-Cave/Philippines) (Tarantula spider)).